We begin with the raw amino-acid sequence, 937 residues long: Periplasmic nitrate reductase (937 aa).

A signal peptide (tat-type signal) is located at residues 1–31; the sequence is MSMNRREFLKTTAAAAAASAVGISIPSEAKA. The region spanning 40-96 is the 4Fe-4S Mo/W bis-MGD-type domain; the sequence is WQWDKAVCRFCGTGCGIMVAVKDDKIVAVKGDPESPVNRGINCIKGYFNAKIMYGAD. 4 residues coordinate [4Fe-4S] cluster: cysteine 47, cysteine 50, cysteine 54, and cysteine 82. Residues lysine 84, glutamine 152, asparagine 177, cysteine 181, 214–221, methionine 422, glutamine 426, asparagine 532, lysine 580, aspartate 607, and 827–836 each bind Mo-bis(molybdopterin guanine dinucleotide); these read WGANMAEM and TGRVLEHWHS. Tryptophan 903 is a substrate binding site. Asparagine 911 and lysine 928 together coordinate Mo-bis(molybdopterin guanine dinucleotide).

The protein belongs to the prokaryotic molybdopterin-containing oxidoreductase family. NasA/NapA/NarB subfamily. As to quaternary structure, component of the periplasmic nitrate reductase NapAB complex composed of NapA and NapB. Requires [4Fe-4S] cluster as cofactor. Mo-bis(molybdopterin guanine dinucleotide) serves as cofactor. In terms of processing, predicted to be exported by the Tat system. The position of the signal peptide cleavage has not been experimentally proven.

Its subcellular location is the periplasm. It carries out the reaction 2 Fe(II)-[cytochrome] + nitrate + 2 H(+) = 2 Fe(III)-[cytochrome] + nitrite + H2O. Catalytic subunit of the periplasmic nitrate reductase complex NapAB. Receives electrons from NapB and catalyzes the reduction of nitrate to nitrite. This chain is Periplasmic nitrate reductase, found in Nautilia profundicola (strain ATCC BAA-1463 / DSM 18972 / AmH).